Consider the following 178-residue polypeptide: MHSSALLCCLVLLTGVRASPGQGTQSENSCTHFPGNLPNMLRDLRDAFSRVKTFFQMKDQLDNLLLKESLLEDFKGYLGCQALXEMIQFYLEEVMPQAENQDPDIKVHVNSLGENLKTLRLRLRRCHRFLPCENKSKAVEQVKNAFNKLQEKGIYKAMSEFDIFINYIEAYMTMKIRN.

An N-terminal signal peptide occupies residues 1 to 18 (MHSSALLCCLVLLTGVRA). Cystine bridges form between Cys-30-Cys-126 and Cys-80-Cys-132. N-linked (GlcNAc...) asparagine glycosylation occurs at Asn-134.

It belongs to the IL-10 family. Homodimer. Interacts with IL10RA and IL10RB.

Its subcellular location is the secreted. Functionally, major immune regulatory cytokine that acts on many cells of the immune system where it has profound anti-inflammatory functions, limiting excessive tissue disruption caused by inflammation. Mechanistically, IL10 binds to its heterotetrameric receptor comprising IL10RA and IL10RB leading to JAK1 and STAT2-mediated phosphorylation of STAT3. In turn, STAT3 translocates to the nucleus where it drives expression of anti-inflammatory mediators. Targets antigen-presenting cells (APCs) such as macrophages and monocytes and inhibits their release of pro-inflammatory cytokines including granulocyte-macrophage colony-stimulating factor /GM-CSF, granulocyte colony-stimulating factor/G-CSF, IL-1 alpha, IL-1 beta, IL-6, IL-8 and TNF-alpha. Also interferes with antigen presentation by reducing the expression of MHC-class II and co-stimulatory molecules, thereby inhibiting their ability to induce T cell activation. In addition, controls the inflammatory response of macrophages by reprogramming essential metabolic pathways including mTOR signaling. The protein is Interleukin-10 (IL10) of Pan troglodytes (Chimpanzee).